The chain runs to 66 residues: Large ribosomal subunit protein bL33c (66 aa).

This sequence belongs to the bacterial ribosomal protein bL33 family.

The protein resides in the plastid. Its subcellular location is the chloroplast. In Oryza nivara (Indian wild rice), this protein is Large ribosomal subunit protein bL33c.